Here is a 376-residue protein sequence, read N- to C-terminus: UDP-N-acetylglucosamine--N-acetylmuramyl-(pentapeptide) pyrophosphoryl-undecaprenol N-acetylglucosamine transferase (376 aa).

Residues 11 to 13 (TGG), asparagine 117, arginine 160, serine 208, and glutamine 310 each bind UDP-N-acetyl-alpha-D-glucosamine.

The protein belongs to the glycosyltransferase 28 family. MurG subfamily.

It is found in the cell inner membrane. It carries out the reaction di-trans,octa-cis-undecaprenyl diphospho-N-acetyl-alpha-D-muramoyl-L-alanyl-D-glutamyl-meso-2,6-diaminopimeloyl-D-alanyl-D-alanine + UDP-N-acetyl-alpha-D-glucosamine = di-trans,octa-cis-undecaprenyl diphospho-[N-acetyl-alpha-D-glucosaminyl-(1-&gt;4)]-N-acetyl-alpha-D-muramoyl-L-alanyl-D-glutamyl-meso-2,6-diaminopimeloyl-D-alanyl-D-alanine + UDP + H(+). It participates in cell wall biogenesis; peptidoglycan biosynthesis. In terms of biological role, cell wall formation. Catalyzes the transfer of a GlcNAc subunit on undecaprenyl-pyrophosphoryl-MurNAc-pentapeptide (lipid intermediate I) to form undecaprenyl-pyrophosphoryl-MurNAc-(pentapeptide)GlcNAc (lipid intermediate II). The chain is UDP-N-acetylglucosamine--N-acetylmuramyl-(pentapeptide) pyrophosphoryl-undecaprenol N-acetylglucosamine transferase from Rickettsia massiliae (strain Mtu5).